The following is a 347-amino-acid chain: UDP-3-O-acylglucosamine N-acyltransferase (347 aa).

Residue histidine 242 is the Proton acceptor of the active site.

This sequence belongs to the transferase hexapeptide repeat family. LpxD subfamily. As to quaternary structure, homotrimer.

The enzyme catalyses a UDP-3-O-[(3R)-3-hydroxyacyl]-alpha-D-glucosamine + a (3R)-hydroxyacyl-[ACP] = a UDP-2-N,3-O-bis[(3R)-3-hydroxyacyl]-alpha-D-glucosamine + holo-[ACP] + H(+). The protein operates within bacterial outer membrane biogenesis; LPS lipid A biosynthesis. Catalyzes the N-acylation of UDP-3-O-acylglucosamine using 3-hydroxyacyl-ACP as the acyl donor. Is involved in the biosynthesis of lipid A, a phosphorylated glycolipid that anchors the lipopolysaccharide to the outer membrane of the cell. This is UDP-3-O-acylglucosamine N-acyltransferase from Dechloromonas aromatica (strain RCB).